Consider the following 156-residue polypeptide: CASP-like protein 5C1 (156 aa).

Residues 1-21 are Cytoplasmic-facing; it reads MENRERAGAGAVGSAGSLGLR. The chain crosses the membrane as a helical span at residues 22-42; that stretch reads VGQAVFSSASLLFMSVGVEFF. The Extracellular segment spans residues 43 to 46; it reads SYTA. Residues 47–67 traverse the membrane as a helical segment; that stretch reads FCFLVTIMGLVIPWSCTLAMI. At 68–81 the chain is on the cytoplasmic side; that stretch reads DVYSILVGCPLRVP. A helical membrane pass occupies residues 82–102; it reads GVMVIVVIGDWVLAILSLAAA. Over 103-132 the chain is Extracellular; it reads SSSAAVIDLLLQFHGSHCSPRFCGRYQLSA. The helical transmembrane segment at 133–153 threads the bilayer; the sequence is MMAFLSWFLTAASSLFNLWFI. The Cytoplasmic segment spans residues 154 to 156; sequence ASR.

It belongs to the Casparian strip membrane proteins (CASP) family. In terms of assembly, homodimer and heterodimers.

Its subcellular location is the cell membrane. This Oryza sativa subsp. japonica (Rice) protein is CASP-like protein 5C1.